The primary structure comprises 128 residues: Sulfurtransferase TusD (128 aa).

Residue Cys-78 is the Cysteine persulfide intermediate of the active site.

It belongs to the DsrE/TusD family. Heterohexamer, formed by a dimer of trimers. The hexameric TusBCD complex contains 2 copies each of TusB, TusC and TusD. The TusBCD complex interacts with TusE.

It is found in the cytoplasm. In terms of biological role, part of a sulfur-relay system required for 2-thiolation of 5-methylaminomethyl-2-thiouridine (mnm(5)s(2)U) at tRNA wobble positions. Accepts sulfur from TusA and transfers it in turn to TusE. The protein is Sulfurtransferase TusD of Shigella boydii serotype 18 (strain CDC 3083-94 / BS512).